The chain runs to 205 residues: Holliday junction branch migration complex subunit RuvA (205 aa).

The segment at 1–64 (MIGKLKGVVD…EDMIRLYGFR (64 aa)) is domain I. The domain II stretch occupies residues 65-143 (SDAEREWFRL…AFAPVDPALV (79 aa)). The flexible linker stretch occupies residues 144-152 (ALAGAVEEG). Residues 153 to 205 (AAPQPVADAVSALVNLGYPQVQAAAAIAAALKGAGEGAEAKVLIRLGLRELAR) are domain III.

It belongs to the RuvA family. In terms of assembly, homotetramer. Forms an RuvA(8)-RuvB(12)-Holliday junction (HJ) complex. HJ DNA is sandwiched between 2 RuvA tetramers; dsDNA enters through RuvA and exits via RuvB. An RuvB hexamer assembles on each DNA strand where it exits the tetramer. Each RuvB hexamer is contacted by two RuvA subunits (via domain III) on 2 adjacent RuvB subunits; this complex drives branch migration. In the full resolvosome a probable DNA-RuvA(4)-RuvB(12)-RuvC(2) complex forms which resolves the HJ.

It is found in the cytoplasm. Its function is as follows. The RuvA-RuvB-RuvC complex processes Holliday junction (HJ) DNA during genetic recombination and DNA repair, while the RuvA-RuvB complex plays an important role in the rescue of blocked DNA replication forks via replication fork reversal (RFR). RuvA specifically binds to HJ cruciform DNA, conferring on it an open structure. The RuvB hexamer acts as an ATP-dependent pump, pulling dsDNA into and through the RuvAB complex. HJ branch migration allows RuvC to scan DNA until it finds its consensus sequence, where it cleaves and resolves the cruciform DNA. This Methylobacterium radiotolerans (strain ATCC 27329 / DSM 1819 / JCM 2831 / NBRC 15690 / NCIMB 10815 / 0-1) protein is Holliday junction branch migration complex subunit RuvA.